We begin with the raw amino-acid sequence, 790 residues long: MATTSPCAAPSPSLRCPLALSHPFASPPPPPALRLAGPKLLPGRLAVSPPPGIPAVASALESLILDLDDDEEDEDEETEFGLFQGEAWAAADEREAVRSPELVVPELEELPEQWRRSRIAWLCKELPAYKHSTFTRILNAQRKWITQDDATYVAVHCLRIRNNDAAFRVYSWMVRQHWFRFNFALATRVADCLGRDGKVEKCREVFEAMVKQGRVPAESTFHILIVAYLSVPKGRCLEEACTIYNQMIQMGGYKPRLSLHNSLFRALVSKTGGTAKYNLKQAEFVYHNVVTTNLDVHKDVYAGLIWLHSYQDVIDRERIIALRKEMKQAGFDEGIDVLVSVMRAFSKEGNVAETEATWHNILQSGSDLPVQAYVCRMEAYARTGEPMKSLDMFKEMKDKNIPPNVASYHKIIEIMTKALEVDIVEQLMNEFIESDMKHLMPAFLDLMYMYMDLDMHEKLELTFLKCIARCRPNRILYTIYLESLVKVGNIEKAEEVFGEMHNNGMIGTNTKSCNIMLRGYLSAEDYQKAEKVYDMMSKKKYDVQADSLEKLQSGLLLNKKVIKPKTVSMKLDQEQREILIGLLLGGTRMESYAQRGVHIVHFQFQEDSNAHSVLRVHIHERFFEWLSSASRSFDDGSKIPYQFSTIPHQHFSFFVDQFFLKGQPVLPKLIHRWLTPRVLAYWFMFGGSKLPSGDIVLKLSGGNSEGVERIVNSLHTQSLTSKVKRKGRFFWIGFQGSNAESFWRIIEPHVLNNFASLVTQEGSSIGSDGTQDTDTDSDDDMQMSDTERDE.

A chloroplast-targeting transit peptide spans 1-56 (MATTSPCAAPSPSLRCPLALSHPFASPPPPPALRLAGPKLLPGRLAVSPPPGIPAV). PPR repeat units follow at residues 182 to 216 (NFALATRVADCLGRDGKVEKCREVFEAMVKQGRVP), 217 to 254 (AESTFHILIVAYLSVPKGRCLEEACTIYNQMIQMGGYK), 256 to 296 (RLSL…NLDV), 299 to 333 (DVYAGLIWLHSYQDVIDRERIIALRKEMKQAGFDE), 334 to 368 (GIDVLVSVMRAFSKEGNVAETEATWHNILQSGSDL), 369 to 403 (PVQAYVCRMEAYARTGEPMKSLDMFKEMKDKNIPP), 404 to 438 (NVASYHKIIEIMTKALEVDIVEQLMNEFIESDMKH), 439 to 469 (LMPAFLDLMYMYMDLDMHEKLELTFLKCIAR), 473 to 507 (NRILYTIYLESLVKVGNIEKAEEVFGEMHNNGMIG), and 509 to 543 (NTKSCNIMLRGYLSAEDYQKAEKVYDMMSKKKYDV). The interval 762 to 790 (GSSIGSDGTQDTDTDSDDDMQMSDTERDE) is disordered. The segment covering 771-790 (QDTDTDSDDDMQMSDTERDE) has biased composition (acidic residues).

This sequence belongs to the PPR family. P subfamily.

Its subcellular location is the plastid. The protein localises to the chloroplast. Functionally, promotes the splicing of group II introns in chloroplasts. Required for the splicing of intron 2 of plastid ycf3 transcripts, a factor required for the assembly of photosystem I (PSI). Involved in the splicing of atpF, ndhA, petB and rps16 chloroplastic transcripts. Required for the assembly of PSI. The chain is Pentatricopeptide repeat-containing protein OTP51, chloroplastic from Oryza sativa subsp. japonica (Rice).